Consider the following 300-residue polypeptide: Cysteine-rich venom protein (300 aa).

Positions 1–21 (MLSTMQTVGAVLMLSIVLVAG) are cleaved as a signal peptide. The propeptide occupies 22–24 (RKR). In terms of domain architecture, SCP spans 62-183 (LEMHNKIRAD…GNNKYFVCNY (122 aa)).

Post-translationally, contains 11 disulfide bonds. As to expression, expressed by the venom duct.

The protein localises to the secreted. Its function is as follows. Protease responsible for cleaving the conotoxins from their propeptide precursors. The target propeptide requires minimum four residues including a leucine N-terminal of the cleavage site for efficient substrate processing (example: Xaa-Xaa-Xaa-Leu-Asn-Lys-Arg-toxin). The protein is Cysteine-rich venom protein of Conus textile (Cloth-of-gold cone).